A 687-amino-acid chain; its full sequence is Chloride channel protein ClC-Kb (687 aa).

The Cytoplasmic portion of the chain corresponds to 1–50 (MEEIVGLREGSPRKPVPLQELWRPCPRIRRNIQGSLEWLKERLFRVGEDW). 2 helical membrane-spanning segments follow: residues 51–82 (YFLV…KWLY) and 91–111 (LRYL…SGFS). An intramembrane region (helical) is located at residues 116 to 127 (PSSGGSGIPEVK). Position 121 (Ser-121) interacts with chloride. 2 consecutive transmembrane segments (helical) span residues 141 to 160 (IKNF…TGST) and 161 to 180 (IFLG…AAYL). The N-linked (GlcNAc...) asparagine glycan is linked to Asn-193. Positions 203 to 224 (AGAAVGVATVFAAPISGVLFSI) form an intramembrane region, helical. Residues 236–255 (YWRGFFAATCGAFMFHLLAV) form a helical membrane-spanning segment. The Ca(2+) site is built by Glu-259, Glu-261, Asp-278, and Glu-281. The next 2 membrane-spanning stretches (helical) occupy residues 282 to 310 (IFFF…LFFL) and 325 to 342 (PLYS…TYPP). Residues 349–360 (ASRLSMSEYLET) constitute an intramembrane region (helical). 2 consecutive transmembrane segments (helical) span residues 400 to 420 (GTLV…TTIP) and 421 to 440 (IPAG…GRLF). Chloride is bound at residue Phe-426. An intramembrane region (helical) is located at residues 464–496 (GAYALAGAAAFSGAVTHTLSTALLAFEVSGQIV). A helical membrane pass occupies residues 500 to 520 (PVLMAVLAANAICQSYQPSFY). At 521 to 687 (DGTIIVKKLP…STLTNPPAPK (167 aa)) the chain is on the cytoplasmic side. CBS domains follow at residues 551–609 (MNCT…DSAS) and 626–687 (CPTQ…PAPK).

The protein belongs to the chloride channel (TC 2.A.49) family. CLCNKB subfamily. Homodimer. Interacts with BSND. Post-translationally, N-glycosylated. As to expression, expressed predominantly in the kidney. Expressed in all segments of the nephron examined, including the S2 segment and the glomerulus.

It localises to the basolateral cell membrane. The catalysed reaction is chloride(in) = chloride(out). It carries out the reaction iodide(out) = iodide(in). It catalyses the reaction nitrate(in) = nitrate(out). The enzyme catalyses bromide(in) = bromide(out). Functionally, anion-selective channel permeable to small monovalent anions with ion selectivity for chloride &gt; bromide &gt; nitrate &gt; iodide. Forms a homodimeric channel where each subunit has its own ion conduction pathway. May conduct double-barreled currents controlled by two types of gates, two fast gates that control each subunit independently and a slow common gate that opens and shuts off both subunits simultaneously. Assembles with the regulatory subunit BSND/Barttin for sorting at the basolateral plasma membrane domain and functional switch to the ion conducting state. CLCNKB:BSND channels display mostly a linear current-voltage relationship controlled by common gate. Mediates chloride conductance along nephron segments, namely the thick ascending limb of Henle's loop, convoluted tubule and the collecting duct, contributing to the maintenance of systemic acid-base and electrolyte homeostasis. Conducts chloride currents in the stria vascularis of the inner ear to establish the endocochlear potential necessary for normal hearing. The protein is Chloride channel protein ClC-Kb of Rattus norvegicus (Rat).